Consider the following 379-residue polypeptide: Ascochitine biosynthesis cluster protein 8 (379 aa).

A run of 3 helical transmembrane segments spans residues E87–E107, V116–C136, and I141–L161.

The protein localises to the membrane. Its pathway is mycotoxin biosynthesis. In terms of biological role, part of the gene cluster that mediates the biosynthesis of the selective antifungal agent ascochitine, an o-quinone methide that plays a possible protective role against other microbial competitors in nature and is considered to be important for pathogenicity of legume-associated Didymella species. The pathway probably begins with the synthesis of a keto-aldehyde intermediate by the ascochitine non-reducing polyketide synthase pksAC from successive condensations of 4 malonyl-CoA units, presumably with a simple acetyl-CoA starter unit. Release of the keto-aldehyde intermediate is consistent with the presence of the C-terminal reductive release domain. The HR-PKS (orf7) probably makes a diketide starter unit which is passed to the non-reducing polyketide synthase pksAC for further extension, producing ascochital and ascochitine. The aldehyde dehydrogenase (orf1), the 2-oxoglutarate-dependent dioxygenase (orf3) and the dehydrogenase (orf9) are probably involved in subsequent oxidations of methyl groups to the carboxylic acid of the heterocyclic ring. The ascochitine gene cluster also includes a gene encoding a short peptide with a cupin domain (orf2) that is often found in secondary metabolite gene clusters and which function has still to be determined. This Didymella fabae (Leaf and pod spot disease fungus) protein is Ascochitine biosynthesis cluster protein 8.